The chain runs to 252 residues: UPF0246 protein Fjoh_4905 (252 aa).

This sequence belongs to the UPF0246 family.

This Flavobacterium johnsoniae (strain ATCC 17061 / DSM 2064 / JCM 8514 / BCRC 14874 / CCUG 350202 / NBRC 14942 / NCIMB 11054 / UW101) (Cytophaga johnsonae) protein is UPF0246 protein Fjoh_4905.